The primary structure comprises 388 residues: 8-amino-7-oxononanoate synthase (388 aa).

Arginine 20 contacts substrate. Residue 107-108 (GY) participates in pyridoxal 5'-phosphate binding. Histidine 132 contributes to the substrate binding site. 3 residues coordinate pyridoxal 5'-phosphate: serine 178, histidine 206, and threonine 237. Lysine 240 is subject to N6-(pyridoxal phosphate)lysine. Threonine 356 provides a ligand contact to substrate.

It belongs to the class-II pyridoxal-phosphate-dependent aminotransferase family. BioF subfamily. As to quaternary structure, homodimer. Requires pyridoxal 5'-phosphate as cofactor.

It catalyses the reaction 6-carboxyhexanoyl-[ACP] + L-alanine + H(+) = (8S)-8-amino-7-oxononanoate + holo-[ACP] + CO2. The protein operates within cofactor biosynthesis; biotin biosynthesis. Its function is as follows. Catalyzes the decarboxylative condensation of pimeloyl-[acyl-carrier protein] and L-alanine to produce 8-amino-7-oxononanoate (AON), [acyl-carrier protein], and carbon dioxide. The polypeptide is 8-amino-7-oxononanoate synthase (Herminiimonas arsenicoxydans).